The chain runs to 281 residues: Bifunctional protein FolD (281 aa).

NADP(+) is bound by residues 167–169 (GRS) and Ser192.

This sequence belongs to the tetrahydrofolate dehydrogenase/cyclohydrolase family. As to quaternary structure, homodimer.

The enzyme catalyses (6R)-5,10-methylene-5,6,7,8-tetrahydrofolate + NADP(+) = (6R)-5,10-methenyltetrahydrofolate + NADPH. The catalysed reaction is (6R)-5,10-methenyltetrahydrofolate + H2O = (6R)-10-formyltetrahydrofolate + H(+). Its pathway is one-carbon metabolism; tetrahydrofolate interconversion. Catalyzes the oxidation of 5,10-methylenetetrahydrofolate to 5,10-methenyltetrahydrofolate and then the hydrolysis of 5,10-methenyltetrahydrofolate to 10-formyltetrahydrofolate. This chain is Bifunctional protein FolD, found in Alcanivorax borkumensis (strain ATCC 700651 / DSM 11573 / NCIMB 13689 / SK2).